We begin with the raw amino-acid sequence, 504 residues long: Aromatic and large neutral amino acid transporter 5-3 (504 aa).

The interval 1 to 24 is disordered; sequence MESTEATMVERKAESPSSGDRARS. Over residues 8-24 the composition is skewed to basic and acidic residues; that stretch reads MVERKAESPSSGDRARS. Helical transmembrane passes span 76-96, 138-158, 165-185, 206-226, 233-253, and 256-276; these read YVVL…FMNW, HLFT…GIML, FGAL…GFSS, FFPC…IIAV, ISFI…GATF, and VMLG…LFII. Asn-310 carries an N-linked (GlcNAc...) asparagine glycan. The next 6 membrane-spanning stretches (helical) occupy residues 324–344, 356–376, 381–401, 406–426, 436–456, and 475–495; these read LSFL…LFFA, EANQ…GGIA, IVPV…LMLI, CFAA…SFLV, IFYP…GGII, and MTVL…FMYV.

The protein belongs to the SLC43A transporter (TC 2.A.1.44) family.

It is found in the cell membrane. The catalysed reaction is L-tyrosine(in) = L-tyrosine(out). L-tyrosine uptake is stimulated in trans by aromatic and large neutral amino acids, but not smaller or charged amino acids. Functionally, L-tyrosine transporter that is essential for parasite survival and virulence. May also act as an aromatic and large neutral amino acid transporter. Does not cotransport other charged ions. Involved in amino acid homeostasis by facilitating the net uptake of L-tyrosine and maintaining intracellular pools of aromatic and large neutral amino acids through exchange. This Toxoplasma gondii protein is Aromatic and large neutral amino acid transporter 5-3.